A 131-amino-acid chain; its full sequence is Small ribosomal subunit protein uS8 (131 aa).

The protein belongs to the universal ribosomal protein uS8 family. Part of the 30S ribosomal subunit. Contacts proteins S5 and S12.

Functionally, one of the primary rRNA binding proteins, it binds directly to 16S rRNA central domain where it helps coordinate assembly of the platform of the 30S subunit. This is Small ribosomal subunit protein uS8 from Nitrosomonas eutropha (strain DSM 101675 / C91 / Nm57).